The chain runs to 410 residues: 45 kDa immediate-early protein 2 (410 aa).

A disordered region spans residues 36-166 (SEEEQGEEVE…SKRISELDNE (131 aa)). Composition is skewed to low complexity over residues 47-67 (RGAT…TSPT), 90-101 (SSSSSSCSSASD), and 132-147 (AASS…SSGG). A zinc finger spans residues 257–283 (VRCRLGTMCNLALSTPFLMEHTMPVTH).

Its function is as follows. Activates the E1.7 promoter. This activation is augmented by the IE1 protein. It down-regulates the transcription of genes under the control of the major IE promoter. The sequence is that of 45 kDa immediate-early protein 2 (UL122) from Homo sapiens (Human).